Here is a 356-residue protein sequence, read N- to C-terminus: DNA polymerase IV (356 aa).

The UmuC domain occupies Ile7–Gly187. Residues Asp11 and Asp105 each contribute to the Mg(2+) site. Glu106 is an active-site residue.

It belongs to the DNA polymerase type-Y family. As to quaternary structure, monomer. It depends on Mg(2+) as a cofactor.

It localises to the cytoplasm. The catalysed reaction is DNA(n) + a 2'-deoxyribonucleoside 5'-triphosphate = DNA(n+1) + diphosphate. Poorly processive, error-prone DNA polymerase involved in untargeted mutagenesis. Copies undamaged DNA at stalled replication forks, which arise in vivo from mismatched or misaligned primer ends. These misaligned primers can be extended by PolIV. Exhibits no 3'-5' exonuclease (proofreading) activity. May be involved in translesional synthesis, in conjunction with the beta clamp from PolIII. In Stenotrophomonas maltophilia (strain R551-3), this protein is DNA polymerase IV.